The primary structure comprises 348 residues: UDP-N-acetyl-alpha-D-glucosaminouronate 4-epimerase (348 aa).

F26, I27, D46, T50, G51, D77, I78, Q97, Y165, K169, and V195 together coordinate NAD(+). Residue Y165 is the Proton acceptor of the active site.

It belongs to the NAD(P)-dependent epimerase/dehydratase family. As to quaternary structure, homodimer. NAD(+) serves as cofactor.

It carries out the reaction UDP-2-acetamido-2-deoxy-alpha-D-glucuronate = UDP-2-acetamido-2-deoxy-alpha-D-galacturonate. The enzyme catalyses UDP-N-acetyl-alpha-D-glucosamine = UDP-N-acetyl-alpha-D-galactosamine. It functions in the pathway capsule biogenesis; capsule polysaccharide biosynthesis. The protein operates within glycan metabolism; Vi-antigen biosynthesis. Functionally, epimerase required for the biosynthesis of the capsular polysaccharide, commonly referred as the Vi antigen, an important virulence factor. Catalyzes the reversible epimerization of UDP-N-acetylglucosaminuronic acid (UDP-GlcNAcA) to UDP-N-acetylgalactosaminuronic acid (UDP-GalNAcA). Also catalyzes, with lower efficiency, the reversible epimerization of UDP-N-acetylglucosamine (UDP-GlcNAc) to UDP-N-acetylgalactosamine (UDP-GalNAc). Cannot use UDP-glucose (UDP-Glc) and UDP-galactose (UDP-Gal) as substrates. This Salmonella typhi protein is UDP-N-acetyl-alpha-D-glucosaminouronate 4-epimerase.